A 533-amino-acid chain; its full sequence is Retinoic acid receptor RXR-beta (533 aa).

Residues 1-23 form a disordered region; it reads MSWAARPPFLPQRHAAGQCGPVG. Residues 1–204 are modulating; the sequence is MSWAARPPFL…PGGPGAGKRL (204 aa). Arg25 carries the omega-N-methylarginine modification. Residues 36 to 181 are disordered; the sequence is WRRRRPWLDP…GSGPPEDVKP (146 aa). Residues 46 to 61 are compositionally biased toward low complexity; it reads AAAAAAAVAGGEQQTP. Residues 67–82 are compositionally biased toward basic and acidic residues; the sequence is EAGRDGMGDSGRDSRS. Composition is skewed to pro residues over residues 89–109 and 118–131; these read NPLPQGVPPPSPPGPPLPPST and APPPPPMPPPPLGS. Residues 132-143 are compositionally biased toward low complexity; the sequence is PFPVISSSMGSP. Pro residues predominate over residues 144–153; that stretch reads GLPPPAPPGF. NR C4-type zinc fingers lie at residues 205–225 and 241–265; these read CAICGDRSSGKHYGVYSCEGC and CRDNKDCTVDKRQRNRCQYCRYQKC. The segment at residues 205-270 is a DNA-binding region (nuclear receptor); that stretch reads CAICGDRSSG…RYQKCLATGM (66 aa). Residues 271–295 form a hinge region; it reads KREAVQEERQRGKDKDGDGEGAGGA. Over residues 276–288 the composition is skewed to basic and acidic residues; the sequence is QEERQRGKDKDGD. Disordered stretches follow at residues 276 to 299 and 313 to 336; these read QEERQRGKDKDGDGEGAGGAPEEM and QKSDQGVEGPGGTGGSGSSPNDPV. An NR LBD domain is found at 296-529; the sequence is PEEMPVDRIL…TFLMEMLEAP (234 aa). The segment covering 320 to 329 has biased composition (gly residues); the sequence is EGPGGTGGSG.

It belongs to the nuclear hormone receptor family. NR2 subfamily. In terms of assembly, homodimer (in vitro). Heterodimer with other retinoic acid receptor family members. Binds DNA preferentially as a RAR/RXR heterodimer. Interacts with NR1H3. Interacts with AKAP13. As to expression, expressed in aortic endothelial cells (at protein level). Expressed in monocytes. Expressed in a variety of tumor cell lines.

It is found in the nucleus. Its subcellular location is the cytoplasm. Functionally, receptor for retinoic acid. Retinoic acid receptors bind as heterodimers to their target response elements in response to their ligands, all-trans or 9-cis retinoic acid, and regulate gene expression in various biological processes. The RAR/RXR heterodimers bind to the retinoic acid response elements (RARE). This is Retinoic acid receptor RXR-beta (RXRB) from Homo sapiens (Human).